Reading from the N-terminus, the 193-residue chain is Ion-translocating oxidoreductase complex subunit B (193 aa).

The hydrophobic stretch occupies residues 1–26 (MSTMLIAVILLTLLALFFGVLLGFAA). The 59-residue stretch at 32–90 (EGNPIVDELEAILPQTQCGQCGYPGCRPYAEAIANGDKVNKCPPGGTATMEKLASLMGV) folds into the 4Fe-4S domain. [4Fe-4S] cluster-binding residues include Cys49, Cys52, Cys57, Cys73, Cys114, Cys117, Cys120, Cys124, Cys144, Cys147, Cys150, and Cys154. 2 4Fe-4S ferredoxin-type domains span residues 105–134 (KVAY…GAGK) and 136–164 (MHTV…MIPV).

The protein belongs to the 4Fe4S bacterial-type ferredoxin family. RnfB subfamily. The complex is composed of six subunits: RnfA, RnfB, RnfC, RnfD, RnfE and RnfG. It depends on [4Fe-4S] cluster as a cofactor.

Its subcellular location is the cell inner membrane. Its function is as follows. Part of a membrane-bound complex that couples electron transfer with translocation of ions across the membrane. This Shewanella sp. (strain MR-7) protein is Ion-translocating oxidoreductase complex subunit B.